The primary structure comprises 548 residues: Chaperonin GroEL (548 aa).

ATP contacts are provided by residues 30–33, K51, 87–91, G415, 479–481, and D495; these read TLGP, DGTTT, and NAA.

Belongs to the chaperonin (HSP60) family. As to quaternary structure, forms a cylinder of 14 subunits composed of two heptameric rings stacked back-to-back. Interacts with the co-chaperonin GroES.

Its subcellular location is the cytoplasm. It catalyses the reaction ATP + H2O + a folded polypeptide = ADP + phosphate + an unfolded polypeptide.. Together with its co-chaperonin GroES, plays an essential role in assisting protein folding. The GroEL-GroES system forms a nano-cage that allows encapsulation of the non-native substrate proteins and provides a physical environment optimized to promote and accelerate protein folding. This Pectobacterium carotovorum subsp. carotovorum (strain PC1) protein is Chaperonin GroEL.